The primary structure comprises 285 residues: 2,3,4,5-tetrahydropyridine-2,6-dicarboxylate N-succinyltransferase (285 aa).

Substrate-binding residues include Arg111 and Asp148.

It belongs to the transferase hexapeptide repeat family. As to quaternary structure, homotrimer.

It localises to the cytoplasm. The catalysed reaction is (S)-2,3,4,5-tetrahydrodipicolinate + succinyl-CoA + H2O = (S)-2-succinylamino-6-oxoheptanedioate + CoA. It participates in amino-acid biosynthesis; L-lysine biosynthesis via DAP pathway; LL-2,6-diaminopimelate from (S)-tetrahydrodipicolinate (succinylase route): step 1/3. In Allorhizobium ampelinum (strain ATCC BAA-846 / DSM 112012 / S4) (Agrobacterium vitis (strain S4)), this protein is 2,3,4,5-tetrahydropyridine-2,6-dicarboxylate N-succinyltransferase.